The following is a 629-amino-acid chain: tRNA uridine 5-carboxymethylaminomethyl modification enzyme MnmG (629 aa).

FAD is bound at residue 13-18; that stretch reads GGGHAG. Position 273-287 (273-287) interacts with NAD(+); sequence GPRYCPSIEDKIHRF.

Belongs to the MnmG family. In terms of assembly, homodimer. Heterotetramer of two MnmE and two MnmG subunits. It depends on FAD as a cofactor.

The protein localises to the cytoplasm. In terms of biological role, NAD-binding protein involved in the addition of a carboxymethylaminomethyl (cmnm) group at the wobble position (U34) of certain tRNAs, forming tRNA-cmnm(5)s(2)U34. The protein is tRNA uridine 5-carboxymethylaminomethyl modification enzyme MnmG of Shewanella amazonensis (strain ATCC BAA-1098 / SB2B).